Reading from the N-terminus, the 1308-residue chain is Tau-tubulin kinase 1 (1308 aa).

Residues 34 to 297 enclose the Protein kinase domain; it reads WKVLKKIGGG…LIMSVFENSM (264 aa). Residues 40-48 and Lys-63 each bind ATP; that span reads IGGGGFGEI. Asp-154 acts as the Proton acceptor in catalysis. Disordered stretches follow at residues 364–397, 418–448, 474–671, 720–899, 985–1085, and 1097–1308; these read LSDQENAPPILPGRPPEGLGPGPHLVPHPGGPEA, PCVEEEQSRGVGVPSSPVRAPPDSPTTPVRS, ERRS…APPF, QVPL…AGGG, EMES…LARL, and RLAS…PGAR. Ser-441 is modified (phosphoserine). Positions 485 to 496 are enriched in polar residues; that stretch reads PSRQACSSQPAQ. Position 541 is a phosphoserine (Ser-541). 2 stretches are compositionally biased toward basic and acidic residues: residues 541 to 555 and 574 to 589; these read SKEWVIIDKETELKD and ELRPLPEEGEERRRLG. Positions 638 to 647 are enriched in low complexity; sequence SPSHSPLHSG. The segment covering 735 to 769 has biased composition (acidic residues); it reads GEEEEEEEEEEEEEEEEEEEEEEEEEEEEEEEEEA. The span at 786–795 shows a compositional bias: basic and acidic residues; the sequence is GSERSTERSQ. Polar residues-rich tracts occupy residues 868 to 885 and 1020 to 1035; these read PTGSQLDVSEPGTLSSIL and ASQQEPVTKKGTTISP. Positions 1097–1107 are enriched in low complexity; the sequence is RLASGASSSSS.

The protein belongs to the protein kinase superfamily. CK1 Ser/Thr protein kinase family. Mg(2+) is required as a cofactor. Requires Mn(2+) as cofactor. In terms of tissue distribution, expressed in the brain. Strong expression in the cortical layers, the CA1 layers of the hippocampus and the granular layer of the cerebellum. Also expressed in the large cortical pyramidal cells in the temporal cortex, the CA1 pyramidal neurons and the cerebellum granular neurons.

Its subcellular location is the cytoplasm. It catalyses the reaction L-seryl-[protein] + ATP = O-phospho-L-seryl-[protein] + ADP + H(+). The enzyme catalyses L-threonyl-[protein] + ATP = O-phospho-L-threonyl-[protein] + ADP + H(+). Functionally, serine/threonine kinase which is able to phosphorylate TAU on serine, threonine and tyrosine residues. Induces aggregation of TAU. The protein is Tau-tubulin kinase 1 (Ttbk1) of Mus musculus (Mouse).